Reading from the N-terminus, the 437-residue chain is 3-phosphoshikimate 1-carboxyvinyltransferase (437 aa).

3-phosphoshikimate contacts are provided by lysine 21, serine 22, and arginine 26. Residue lysine 21 participates in phosphoenolpyruvate binding. The phosphoenolpyruvate site is built by glycine 101 and arginine 129. 3-phosphoshikimate-binding residues include serine 172, serine 173, glutamine 174, serine 200, aspartate 314, and lysine 341. Glutamine 174 contributes to the phosphoenolpyruvate binding site. Aspartate 314 serves as the catalytic Proton acceptor. Residues arginine 345, arginine 388, and lysine 414 each contribute to the phosphoenolpyruvate site.

This sequence belongs to the EPSP synthase family. As to quaternary structure, monomer.

It is found in the cytoplasm. The enzyme catalyses 3-phosphoshikimate + phosphoenolpyruvate = 5-O-(1-carboxyvinyl)-3-phosphoshikimate + phosphate. The protein operates within metabolic intermediate biosynthesis; chorismate biosynthesis; chorismate from D-erythrose 4-phosphate and phosphoenolpyruvate: step 6/7. Catalyzes the transfer of the enolpyruvyl moiety of phosphoenolpyruvate (PEP) to the 5-hydroxyl of shikimate-3-phosphate (S3P) to produce enolpyruvyl shikimate-3-phosphate and inorganic phosphate. In Clostridioides difficile (strain 630) (Peptoclostridium difficile), this protein is 3-phosphoshikimate 1-carboxyvinyltransferase.